The chain runs to 226 residues: Ribonuclease HII (226 aa).

The region spanning 29-220 (GPVAGVDEAG…VVAAGVRLEQ (192 aa)) is the RNase H type-2 domain. A divalent metal cation-binding residues include Asp35, Glu36, and Asp129.

This sequence belongs to the RNase HII family. Mn(2+) is required as a cofactor. Requires Mg(2+) as cofactor.

It localises to the cytoplasm. The enzyme catalyses Endonucleolytic cleavage to 5'-phosphomonoester.. Its function is as follows. Endonuclease that specifically degrades the RNA of RNA-DNA hybrids. The sequence is that of Ribonuclease HII from Rhodococcus erythropolis (strain PR4 / NBRC 100887).